Reading from the N-terminus, the 606-residue chain is Kelch-like protein 41 (606 aa).

Ser-3 carries the phosphoserine modification. The BTB domain occupies 33-100; the sequence is IDCTLKAGDK…LYSASIDLND (68 aa). Positions 135–237 constitute a BACK domain; that stretch reads CLAILRLGLL…TEKYFKDHVE (103 aa). 5 Kelch repeats span residues 346–398, 399–447, 448–495, 497–542, and 544–599; these read QIYV…EVDD, KIYV…SHKG, MIYC…VHKG, IVIA…SLAG, and LYAI…TRLN.

Interacts with NRAP. Interacts with LASP1. Part of a complex that contains CUL3, RBX1 and KLHL41. Ubiquitinated by E3 ubiquitin ligase complex formed by CUL3 and RBX1 and probably targeted for proteasome-independent degradation. Quinone-induced oxidative stress increases its ubiquitination. Sarcomeric muscle.

The protein resides in the cytoplasm. Its subcellular location is the cytoskeleton. It is found in the cell projection. It localises to the pseudopodium. The protein localises to the ruffle. The protein resides in the myofibril. Its subcellular location is the sarcomere. It is found in the m line. It localises to the sarcoplasmic reticulum membrane. The protein localises to the endoplasmic reticulum membrane. In terms of biological role, involved in skeletal muscle development and differentiation. Regulates proliferation and differentiation of myoblasts and plays a role in myofibril assembly by promoting lateral fusion of adjacent thin fibrils into mature, wide myofibrils. Required for pseudopod elongation in transformed cells. This is Kelch-like protein 41 (KLHL41) from Homo sapiens (Human).